The following is a 230-amino-acid chain: Large ribosomal subunit protein uL1 (230 aa).

The protein belongs to the universal ribosomal protein uL1 family. Part of the 50S ribosomal subunit.

Binds directly to 23S rRNA. The L1 stalk is quite mobile in the ribosome, and is involved in E site tRNA release. Its function is as follows. Protein L1 is also a translational repressor protein, it controls the translation of the L11 operon by binding to its mRNA. The protein is Large ribosomal subunit protein uL1 of Paramagnetospirillum magneticum (strain ATCC 700264 / AMB-1) (Magnetospirillum magneticum).